Reading from the N-terminus, the 169-residue chain is E1B protein, small T-antigen (169 aa).

Positions 147-169 (GSVVEEEQGEEHLARDSDDPFFD) are disordered. Basic and acidic residues predominate over residues 156–169 (EEHLARDSDDPFFD).

It belongs to the adenoviridae E1B 19 kDa protein family.

The polypeptide is E1B protein, small T-antigen (Canine adenovirus serotype 1 (strain Glaxo) (CAdV-1)).